Consider the following 130-residue polypeptide: Fluoride-specific ion channel FluC (130 aa).

4 consecutive transmembrane segments (helical) span residues 3-23, 38-58, 67-87, and 102-122; these read FVFLWAALGGAIGSSLRYFVG, LGTFSVNLIGCFVIGFMGHLA, FGIFFVTGVLGGFTTFSSYGL, and VSYVLGTNLLGLIGVAIGWFL. Residues Gly77 and Thr80 each coordinate Na(+).

Belongs to the fluoride channel Fluc/FEX (TC 1.A.43) family.

It is found in the cell inner membrane. It catalyses the reaction fluoride(in) = fluoride(out). Its activity is regulated as follows. Na(+) is not transported, but it plays an essential structural role and its presence is essential for fluoride channel function. In terms of biological role, fluoride-specific ion channel. Important for reducing fluoride concentration in the cell, thus reducing its toxicity. The polypeptide is Fluoride-specific ion channel FluC (Helicobacter pylori (strain HPAG1)).